A 76-amino-acid chain; its full sequence is Protein CASC2, isoforms 1/2 (76 aa).

The tract at residues 1–20 is disordered; that stretch reads MAGTRGLMLLGPGPVAGPRD.

In Homo sapiens (Human), this protein is Protein CASC2, isoforms 1/2 (CASC2).